A 203-amino-acid chain; its full sequence is MDNAILNSELIAIQAGNIIVYNYDGGNREYISASTEYLAVGVGIPANSCLDAPGSHKAGYAILRSEDLSSWEYVPDHRGETVYSIDTGNPEEITVLGDYPENTTTIAPLTPYDKWDGEKWVVDTEAQHSAAVEAAETKRQSLIDTAMDSISLIQLKLRAGRKLTQAETTQLNSVLDYIDELNAMDLTTAPDLNWPEKQLSTAS.

This sequence belongs to the tfa family.

This is Tail fiber assembly protein homolog (T) from Escherichia coli.